The primary structure comprises 284 residues: Fructosamine kinase FrlD (284 aa).

This sequence belongs to the carbohydrate kinase PfkB family.

Catalyzes the phosphorylation of a range of fructosamines to fructosamine 6-phosphates. This is Fructosamine kinase FrlD (frlD) from Bacillus subtilis (strain 168).